We begin with the raw amino-acid sequence, 324 residues long: Probable non-intrinsic ABC protein 5 (324 aa).

In terms of domain architecture, ABC transporter spans 2-111; it reads DRERYDKVIE…ADLTLVMKDG (110 aa). The next 2 helical transmembrane spans lie at 212 to 232 and 259 to 279; these read YITL…QILF and LSTL…CILV. An ABC transmembrane type-1 domain is found at 222–324; it reads VPFILLGQIL…TCSKTCIYSS (103 aa).

This sequence belongs to the ABC transporter superfamily.

The protein localises to the membrane. The polypeptide is Probable non-intrinsic ABC protein 5 (NAP5) (Arabidopsis thaliana (Mouse-ear cress)).